We begin with the raw amino-acid sequence, 704 residues long: Glycogen [starch] synthase, liver (704 aa).

Residue Ser-8 is modified to Phosphoserine; by AMPK and PKA. The residue at position 11 (Ser-11) is a Phosphoserine. Lys-40 serves as a coordination point for UDP. UDP-alpha-D-glucose is bound by residues His-205 and Arg-211. The alpha-D-glucose 6-phosphate site is built by His-291, Glu-292, Gln-294, His-297, and Lys-301. Arg-331 lines the UDP pocket. A UDP-alpha-D-glucose-binding site is contributed by Arg-331. His-501 contributes to the alpha-D-glucose 6-phosphate binding site. 3 residues coordinate UDP-alpha-D-glucose: Glu-510, Trp-512, and Gly-513. Residue Thr-515 coordinates UDP. Alpha-D-glucose 6-phosphate is bound by residues Arg-582 and Arg-586. The disordered stretch occupies residues 620-704 (KFHLEPTSPP…KKKLHGEYKN (85 aa)). A Phosphoserine modification is found at Ser-627. A phosphoserine; by GSK3-alpha and GSK3-beta mark is found at Ser-641, Ser-645, Ser-649, and Ser-653. Residues 647–657 (SGSQASSPQCS) are compositionally biased toward low complexity. At Ser-657 the chain carries Phosphoserine; by CK2. The segment covering 658–675 (DAEDEEDEDERYDEEEEA) has biased composition (acidic residues). Ser-684 is subject to Phosphoserine.

This sequence belongs to the glycosyltransferase 3 family. In terms of assembly, part of the glycogen synthase (GS)-glycogenin complex, a heterooctamer composed of a tetramer of GS and 2 dimers of glycogenin, where each GS protomer binds to one glycogenin subunit (via glycogenin C-terminus); the GS tetramer may dissociate from glycogenin dimers to continue glycogen polymerization on its own. May also form a heterooctamer complex with GYG1 (via GYG1 C-terminus). In terms of processing, phosphorylation reduces the activity towards UDP-alpha-D-glucose. Primed phosphorylation at Ser-657 (site 5) by CSNK2A1 and CSNK2A2 is required for inhibitory phosphorylation at Ser-641 (site 3a), Ser-645 (site 3b), Ser-649 (site 3c) and Ser-653 (site 4) by GSK3A an GSK3B. Dephosphorylation at Ser-641 and Ser-645 by PP1 activates the enzyme. Phosphorylation at Ser-8 is not required for interaction with GYG1. Interaction with GYG1 does not regulate the phosphorylation at Ser-8 and Ser-641. In terms of tissue distribution, specifically expressed in liver.

It catalyses the reaction [(1-&gt;4)-alpha-D-glucosyl](n) + UDP-alpha-D-glucose = [(1-&gt;4)-alpha-D-glucosyl](n+1) + UDP + H(+). Its pathway is glycan biosynthesis; glycogen biosynthesis. With respect to regulation, allosteric activation by glucose-6-phosphate. Phosphorylation reduces the activity towards UDP-glucose. When in the non-phosphorylated state, glycogen synthase does not require glucose-6-phosphate as an allosteric activator; when phosphorylated it does. In terms of biological role, glycogen synthase participates in the glycogen biosynthetic process along with glycogenin and glycogen branching enzyme. Extends the primer composed of a few glucose units formed by glycogenin by adding new glucose units to it. In this context, glycogen synthase transfers the glycosyl residue from UDP-Glc to the non-reducing end of alpha-1,4-glucan. The polypeptide is Glycogen [starch] synthase, liver (Mus musculus (Mouse)).